We begin with the raw amino-acid sequence, 437 residues long: O-acetyl-L-homoserine sulfhydrylase (437 aa).

The residue at position 216 (Lys-216) is an N6-(pyridoxal phosphate)lysine.

The protein belongs to the trans-sulfuration enzymes family. As to quaternary structure, homohexamer. It depends on pyridoxal 5'-phosphate as a cofactor.

It catalyses the reaction O-acetyl-L-homoserine + hydrogen sulfide = L-homocysteine + acetate. The enzyme catalyses O-acetyl-L-homoserine + methanethiol = L-methionine + acetate + H(+). Its pathway is amino-acid biosynthesis; L-methionine biosynthesis via de novo pathway; L-homocysteine from O-acetyl-L-homoserine: step 1/1. With respect to regulation, inhibited by methionine and cystathionine. Its function is as follows. Catalyzes the conversion of O-acetyl-L-homoserine (OAH) into homocysteine in the methionine biosynthesis pathway. Can also use dimethyldisulfide and methanethiol as reduced sulfur sources, leading to the direct formation of methionine. Has weak cystathionine gamma-synthase activity. The chain is O-acetyl-L-homoserine sulfhydrylase from Corynebacterium glutamicum (strain ATCC 13032 / DSM 20300 / JCM 1318 / BCRC 11384 / CCUG 27702 / LMG 3730 / NBRC 12168 / NCIMB 10025 / NRRL B-2784 / 534).